Consider the following 332-residue polypeptide: Ribosomal RNA small subunit methyltransferase H (332 aa).

S-adenosyl-L-methionine is bound by residues 36 to 38 (GGY), aspartate 54, phenylalanine 81, aspartate 102, and glutamine 109. Positions 297–318 (ARSAKLRGAERTEAPAHAAGDL) are disordered.

Belongs to the methyltransferase superfamily. RsmH family.

The protein localises to the cytoplasm. The enzyme catalyses cytidine(1402) in 16S rRNA + S-adenosyl-L-methionine = N(4)-methylcytidine(1402) in 16S rRNA + S-adenosyl-L-homocysteine + H(+). Specifically methylates the N4 position of cytidine in position 1402 (C1402) of 16S rRNA. This is Ribosomal RNA small subunit methyltransferase H from Rhodopseudomonas palustris (strain TIE-1).